The sequence spans 512 residues: D-alanine--D-alanyl carrier protein ligase (512 aa).

152–153 (TS) is a binding site for ATP. Asp199 is a D-alanine binding site. Residue 294 to 299 (NAYGPT) participates in ATP binding. Residue Val303 participates in D-alanine binding. Residues Asp385, 397–400 (YGGR), and Lys499 each bind ATP. Lys499 serves as a coordination point for D-alanine.

The protein belongs to the ATP-dependent AMP-binding enzyme family. DltA subfamily.

Its subcellular location is the cytoplasm. It carries out the reaction holo-[D-alanyl-carrier protein] + D-alanine + ATP = D-alanyl-[D-alanyl-carrier protein] + AMP + diphosphate. Its pathway is cell wall biogenesis; lipoteichoic acid biosynthesis. Catalyzes the first step in the D-alanylation of lipoteichoic acid (LTA), the activation of D-alanine and its transfer onto the D-alanyl carrier protein (Dcp) DltC. In an ATP-dependent two-step reaction, forms a high energy D-alanyl-AMP intermediate, followed by transfer of the D-alanyl residue as a thiol ester to the phosphopantheinyl prosthetic group of the Dcp. D-alanylation of LTA plays an important role in modulating the properties of the cell wall in Gram-positive bacteria, influencing the net charge of the cell wall. The protein is D-alanine--D-alanyl carrier protein ligase of Streptococcus pyogenes serotype M28 (strain MGAS6180).